The chain runs to 156 residues: Cyclin-dependent kinase inhibitor 2A (156 aa).

An N-acetylmethionine modification is found at methionine 1. Residues serine 7 and serine 8 each carry the phosphoserine modification. ANK repeat units follow at residues 11 to 40 (PSADWLATAAARGRVEEVRALLEAGALPNA), 44 to 72 (YGRRPIQVMMMGSARVAELLLLHGAEPNC), 77 to 106 (TLTRPVHDAAREGFLDTLVVLHRAGARLDV), and 110 to 139 (WGRLPVDLAEELGHRDVARYLRAAAGGTRG). 2 positions are modified to phosphoserine: serine 140 and serine 152.

Belongs to the CDKN2 cyclin-dependent kinase inhibitor family. In terms of assembly, heterodimer with CDK4 or CDK6. Predominant p16 complexes contained CDK6. Interacts with CDK4 (both 'T-172'-phosphorylated and non-phosphorylated forms); the interaction inhibits cyclin D-CDK4 kinase activity. Interacts with ISCO2. In terms of processing, phosphorylation seems to increase interaction with CDK4. Widely expressed but not detected in brain or skeletal muscle. Isoform 3 is pancreas-specific.

It is found in the cytoplasm. It localises to the nucleus. Acts as a negative regulator of the proliferation of normal cells by interacting strongly with CDK4 and CDK6. This inhibits their ability to interact with cyclins D and to phosphorylate the retinoblastoma protein. This Homo sapiens (Human) protein is Cyclin-dependent kinase inhibitor 2A.